We begin with the raw amino-acid sequence, 211 residues long: MIPAQDITGLILAGGRGSRMGGVDKGLQTFNGMPLALHTLTRLQMGGGVGQIMINANRNLAAYESFGASVWPDGLADYAGPLAGFLTGLEHCETPFLVTVPCDTPRLPLDLVPRLAAALEAENADIAMVAAPEIGKDGQVRLRPQPVFCLLRVELLESLVRFTQEGGRKIDAWTALHKTAVAPFDLPHDDPLAFFNANTLAELHQLENNPA.

Residues L12 to G14, K25, N55, D73, and D103 contribute to the GTP site. D103 lines the Mg(2+) pocket.

Belongs to the MobA family. As to quaternary structure, monomer. Mg(2+) serves as cofactor.

It localises to the cytoplasm. It catalyses the reaction Mo-molybdopterin + GTP + H(+) = Mo-molybdopterin guanine dinucleotide + diphosphate. Its function is as follows. Transfers a GMP moiety from GTP to Mo-molybdopterin (Mo-MPT) cofactor (Moco or molybdenum cofactor) to form Mo-molybdopterin guanine dinucleotide (Mo-MGD) cofactor. In Albidiferax ferrireducens (strain ATCC BAA-621 / DSM 15236 / T118) (Rhodoferax ferrireducens), this protein is Molybdenum cofactor guanylyltransferase.